Consider the following 96-residue polypeptide: Putative membrane protein insertion efficiency factor (96 aa).

Residues 68–96 (DPVPEHFPARHPRPQGSPPTDHPPTDQPS) are disordered. The span at 82–96 (QGSPPTDHPPTDQPS) shows a compositional bias: pro residues.

This sequence belongs to the UPF0161 family.

It is found in the cell membrane. Its function is as follows. Could be involved in insertion of integral membrane proteins into the membrane. This chain is Putative membrane protein insertion efficiency factor, found in Deinococcus radiodurans (strain ATCC 13939 / DSM 20539 / JCM 16871 / CCUG 27074 / LMG 4051 / NBRC 15346 / NCIMB 9279 / VKM B-1422 / R1).